A 492-amino-acid chain; its full sequence is 3-octaprenyl-4-hydroxybenzoate carboxy-lyase (492 aa).

Asparagine 172 lines the Mn(2+) pocket. Prenylated FMN is bound by residues 175 to 177 (IYR), 189 to 191 (RWL), and 194 to 195 (RG). Residue glutamate 238 participates in Mn(2+) binding. Aspartate 287 serves as the catalytic Proton donor.

Belongs to the UbiD family. Homohexamer. It depends on prenylated FMN as a cofactor. The cofactor is Mn(2+).

Its subcellular location is the cell membrane. It catalyses the reaction a 4-hydroxy-3-(all-trans-polyprenyl)benzoate + H(+) = a 2-(all-trans-polyprenyl)phenol + CO2. It participates in cofactor biosynthesis; ubiquinone biosynthesis. Functionally, catalyzes the decarboxylation of 3-octaprenyl-4-hydroxy benzoate to 2-octaprenylphenol, an intermediate step in ubiquinone biosynthesis. This chain is 3-octaprenyl-4-hydroxybenzoate carboxy-lyase, found in Pasteurella multocida (strain Pm70).